The sequence spans 25 residues: Caerin-1.4 (25 aa).

L25 is modified (leucine amide).

This sequence belongs to the frog skin active peptide (FSAP) family. Caerin subfamily. As to expression, expressed by the skin parotoid and/or rostral glands.

It is found in the secreted. Its function is as follows. Antibacterial peptide, that adopts an alpha helical conformation which can disrupt bacterial membranes. Each caerin displays a different antimicrobial specificity. This is Caerin-1.4 from Ranoidea caerulea (Green tree frog).